A 110-amino-acid polypeptide reads, in one-letter code: MLSLAKIAALFVLTAVAEIVGCYLPWLVLKAGKPVWLLAPAALSLALFAWLLTLHPAAAARTYAAYGGVYIAVALAWLRIVDGVPLSRWDAAGAALALAGMSVIALQPRG.

Helical transmembrane passes span 9–29 (ALFV…WLVL), 34–54 (PVWL…LLTL), 64–84 (AAYG…VDGV), and 86–106 (LSRW…VIAL).

Belongs to the UPF0060 family.

It localises to the cell inner membrane. The polypeptide is UPF0060 membrane protein BTH_I2792 (Burkholderia thailandensis (strain ATCC 700388 / DSM 13276 / CCUG 48851 / CIP 106301 / E264)).